The following is a 350-amino-acid chain: Lipase chaperone (350 aa).

The chain crosses the membrane as a helical span at residues 12 to 32 (IVLYLILGCVVVCGVWYSFDV).

It belongs to the lipase chaperone family.

It is found in the cell inner membrane. May be involved in the folding of the extracellular lipase during its passage through the periplasm. The sequence is that of Lipase chaperone (lifO) from Xylella fastidiosa (strain 9a5c).